A 130-amino-acid chain; its full sequence is UPF0102 protein AHA_3896 (130 aa).

The protein belongs to the UPF0102 family.

The sequence is that of UPF0102 protein AHA_3896 from Aeromonas hydrophila subsp. hydrophila (strain ATCC 7966 / DSM 30187 / BCRC 13018 / CCUG 14551 / JCM 1027 / KCTC 2358 / NCIMB 9240 / NCTC 8049).